Here is a 692-residue protein sequence, read N- to C-terminus: Vitamin B12-dependent ribonucleoside-diphosphate reductase (692 aa).

The region spanning 7–95 (AKVRRRDGTL…IYRQRRAELR (89 aa)) is the ATP-cone domain. Substrate is bound by residues Ser177, 192–193 (GC), Gly221, 375–379 (NPCGE), and 520–524 (PTGTI). Cysteines 193 and 388 form a disulfide. The active-site Proton acceptor is the Asn375. Residue Cys377 is the Cysteine radical intermediate of the active site. Glu379 serves as the catalytic Proton acceptor.

Belongs to the ribonucleoside diphosphate reductase class-2 family. It depends on adenosylcob(III)alamin as a cofactor.

The enzyme catalyses a 2'-deoxyribonucleoside 5'-diphosphate + [thioredoxin]-disulfide + H2O = a ribonucleoside 5'-diphosphate + [thioredoxin]-dithiol. In terms of biological role, provides the precursors necessary for DNA synthesis. Catalyzes the biosynthesis of deoxyribonucleotides from the corresponding ribonucleotides. This Mycobacterium tuberculosis (strain CDC 1551 / Oshkosh) protein is Vitamin B12-dependent ribonucleoside-diphosphate reductase (nrdZ).